Reading from the N-terminus, the 253-residue chain is E3 ubiquitin-protein ligase MARCHF3 (253 aa).

The segment at 63–123 (SPFNDRPMCR…ELCHFRFAVE (61 aa)) adopts an RING-CH-type zinc-finger fold. Zn(2+) is bound by residues Cys-71, Cys-74, Cys-87, Cys-89, His-97, Cys-100, Cys-113, and Cys-116. 2 helical membrane passes run 145 to 165 (LFGDMVCFLFITPLATISGWL) and 182 to 202 (AVGLIALTVALFTIYLFWTLV). Phosphoserine is present on residues Ser-237 and Ser-243.

Interacts with MARCHF2 and STX6.

The protein resides in the cytoplasmic vesicle membrane. It localises to the early endosome membrane. The catalysed reaction is S-ubiquitinyl-[E2 ubiquitin-conjugating enzyme]-L-cysteine + [acceptor protein]-L-lysine = [E2 ubiquitin-conjugating enzyme]-L-cysteine + N(6)-ubiquitinyl-[acceptor protein]-L-lysine.. The protein operates within protein modification; protein ubiquitination. E3 ubiquitin-protein ligase which may be involved in endosomal trafficking. E3 ubiquitin ligases accept ubiquitin from an E2 ubiquitin-conjugating enzyme in the form of a thioester and then directly transfer the ubiquitin to targeted substrates. The sequence is that of E3 ubiquitin-protein ligase MARCHF3 (MARCHF3) from Bos taurus (Bovine).